The chain runs to 145 residues: Large ribosomal subunit protein uL11 (145 aa).

This sequence belongs to the universal ribosomal protein uL11 family. As to quaternary structure, part of the ribosomal stalk of the 50S ribosomal subunit. Interacts with L10 and the large rRNA to form the base of the stalk. L10 forms an elongated spine to which L12 dimers bind in a sequential fashion forming a multimeric L10(L12)X complex. One or more lysine residues are methylated.

Functionally, forms part of the ribosomal stalk which helps the ribosome interact with GTP-bound translation factors. The polypeptide is Large ribosomal subunit protein uL11 (Hydrogenobaculum sp. (strain Y04AAS1)).